The sequence spans 551 residues: Scaffold protein OPG125 (551 aa).

It belongs to the orthopoxvirus protein OPG125 family. As to quaternary structure, homotrimer. Self-assembles to form a layer. Interacts with OPG158 (via N-terminus); this interaction is necessary for OPG125 association with membranes.

The protein localises to the membrane. Scaffold protein which forms a transitory spherical honeycomb lattice providing curvature and rigidity to the convex membrane of crescent and immature virions (IV). This association occurs concomitantly with viral membrane formation. Targeted by the drug rifampicin, which prevents the formation of this lattice, and hence virus morphogenesis. In the presence of rifampicin, irregularly shaped membranes that lack the honeycomb layer accumulate around areas of electron-dense viroplasm. This layer is lost from virions during maturation from IV to mature virion (MV), through the proteolysis of OPG158 N-terminus. In Vaccinia virus (strain Ankara) (VACV), this protein is Scaffold protein OPG125 (OPG125).